The chain runs to 73 residues: MKISCFLLLVLSLSCFQINSVSGIDSVKCFQKNNTCHTIRCPYFQDEVGTCYEGRGKCCQKRLLSIRVPKKKV.

Positions methionine 1–glycine 23 are cleaved as a signal peptide. Intrachain disulfides connect cysteine 29–cysteine 58, cysteine 36–cysteine 51, and cysteine 41–cysteine 59.

Belongs to the beta-defensin family.

It localises to the secreted. In terms of biological role, has antibacterial activity. This is Beta-defensin 39 (Defb39) from Rattus norvegicus (Rat).